The following is a 536-amino-acid chain: Berberine bridge enzyme-like 2 (536 aa).

The first 20 residues, 1–20 (MKIFCLILFLISSFISTSLA), serve as a signal peptide directing secretion. Residues Cys-35 and Cys-98 are joined by a disulfide bond. N-linked (GlcNAc...) asparagine glycosylation is found at Asn-38, Asn-73, Asn-136, Asn-266, Asn-334, and Asn-352. The region spanning 76–250 (ATPKPAIVIA…LAFKIKLVPV (175 aa)) is the FAD-binding PCMH-type domain. Residues 113–175 (HDYEGVSYIS…KSHGFPAGVC (63 aa)) constitute a cross-link (6-(S-cysteinyl)-8alpha-(pros-histidyl)-FAD (His-Cys)).

The protein belongs to the oxygen-dependent FAD-linked oxidoreductase family. The cofactor is FAD. The FAD cofactor is bound via a bicovalent 6-S-cysteinyl, 8alpha-N1-histidyl FAD linkage.

The protein localises to the secreted. It localises to the cell wall. The chain is Berberine bridge enzyme-like 2 from Arabidopsis thaliana (Mouse-ear cress).